We begin with the raw amino-acid sequence, 244 residues long: tRNA (guanine-N(1)-)-methyltransferase (244 aa).

Residues Gly113 and 133 to 138 (IGDYVL) contribute to the S-adenosyl-L-methionine site.

This sequence belongs to the RNA methyltransferase TrmD family. Homodimer.

It localises to the cytoplasm. It catalyses the reaction guanosine(37) in tRNA + S-adenosyl-L-methionine = N(1)-methylguanosine(37) in tRNA + S-adenosyl-L-homocysteine + H(+). In terms of biological role, specifically methylates guanosine-37 in various tRNAs. The polypeptide is tRNA (guanine-N(1)-)-methyltransferase (Bacillus cereus (strain G9842)).